The following is a 450-amino-acid chain: 23S rRNA (uracil(1939)-C(5))-methyltransferase RlmD (450 aa).

Residues 12–70 (SKQLSAKLSLSVNQLDHLGAGIAQHQGKVVFIPGALPDETVTVQFTEQKKNYARAKLIK) enclose the TRAM domain. [4Fe-4S] cluster is bound by residues C83, C89, C92, and C171. Residues Q283, F312, N317, E333, D360, and D380 each coordinate S-adenosyl-L-methionine. The active-site Nucleophile is C406.

The protein belongs to the class I-like SAM-binding methyltransferase superfamily. RNA M5U methyltransferase family. RlmD subfamily.

The enzyme catalyses uridine(1939) in 23S rRNA + S-adenosyl-L-methionine = 5-methyluridine(1939) in 23S rRNA + S-adenosyl-L-homocysteine + H(+). Functionally, catalyzes the formation of 5-methyl-uridine at position 1939 (m5U1939) in 23S rRNA. The polypeptide is 23S rRNA (uracil(1939)-C(5))-methyltransferase RlmD (Shewanella baltica (strain OS155 / ATCC BAA-1091)).